The chain runs to 240 residues: Uridylate kinase (240 aa).

Position 14-17 (14-17 (KLSG)) interacts with ATP. G56 is a binding site for UMP. G57 and R61 together coordinate ATP. UMP-binding positions include D76 and 137-144 (TGNPFFTT). ATP contacts are provided by T164, Y170, and D173.

It belongs to the UMP kinase family. In terms of assembly, homohexamer.

It localises to the cytoplasm. The catalysed reaction is UMP + ATP = UDP + ADP. The protein operates within pyrimidine metabolism; CTP biosynthesis via de novo pathway; UDP from UMP (UMPK route): step 1/1. With respect to regulation, inhibited by UTP. In terms of biological role, catalyzes the reversible phosphorylation of UMP to UDP. The protein is Uridylate kinase of Albidiferax ferrireducens (strain ATCC BAA-621 / DSM 15236 / T118) (Rhodoferax ferrireducens).